The chain runs to 892 residues: MQEKYTPLDVEQAAQSHWTAMDAYRVTEDSSKKKFYACSMLPYPSGKLHMGHVRNYTINDMLTRYLRMNGYNVLMPMGWDAFGLPAENAALKNGVPPAQWTFENIAYMKQQMQAMGLAIDWSREVATCDPSYYKWNQWLFLKMLDKGIAYRKTQVVNWDPVDQTVLANEQVIDGKGWRTGATVEKREIPGYYLKITDYAEELLGQVQTGLPGWPERVKLMQENWIGKSEGVRFAFTHDIRDASGALIDDGRMYVFTTRPDTIKGVTFCAVAPEHPLALHAARGNPALAAFIEECKTGGTTEAELATQEKKGLDTGLIVTHPLTQLPVAVWVGNYVLMSYGDGAVMGVPAHDERDFAFAKKYGLPIKQVVQVDGEQFDYDQWQDWYADKQRGVAINSGSFSGMSFKQAVEAVAHKLAALGLGEKKTTWRLRDWGVSRQRYWGTPIPIIHCPEHGAVPVPEKDLPVVLPQDCVPDGSGNPLHKHEGFHAGVVCPICGVAARRETDTMDTFVDSSWYFMRYCDPKNEKAMVGEGAAYWMPMDQYIGGIEHAILHLLYARFWTKVMRDLGLVKVDEPFTKLLTQGMVLNHIYSRKGENGAKDYFWPNDVENVSDETGKVVAAKLKVAVGNLPAGTLVDYEGIGTMSKSKNNGVDPQDLIERYGADTARLYTMFTAPPEATLEWNDAAVEGSYRFLRRVWNFGIKLSTIDMIAVDESTTGATALNDINFSKEAKVLRLEIHTVLKQVDYDYQRMQYNTVVSGAMKMINALENFKATDSGGAQVALIEGFGILLRCLYPATPHIAHSLWQGLGYAGTLGDLLDAPWPQVDELALLQDEVELMLQINGKLRGAIVVSAGASKVEIELAAIDSEVFRKLANGATPKKVIVVPGRLVNLVV.

The 'HIGH' region motif lies at 42–52 (PYPSGKLHMGH). A 'KMSKS' region motif is present at residues 640–644 (TMSKS). Lys643 contacts ATP.

Belongs to the class-I aminoacyl-tRNA synthetase family.

It localises to the cytoplasm. The catalysed reaction is tRNA(Leu) + L-leucine + ATP = L-leucyl-tRNA(Leu) + AMP + diphosphate. This Albidiferax ferrireducens (strain ATCC BAA-621 / DSM 15236 / T118) (Rhodoferax ferrireducens) protein is Leucine--tRNA ligase.